The sequence spans 709 residues: Phosphoribosylformylglycinamidine synthase subunit PurL (709 aa).

The active site involves His-36. ATP-binding residues include Tyr-39 and Lys-80. Glu-82 is a Mg(2+) binding site. Substrate is bound by residues 83–86 (SHNH) and Arg-105. The active-site Proton acceptor is the His-84. Residue Asp-106 participates in Mg(2+) binding. Gln-226 contacts substrate. Position 252 (Asp-252) interacts with Mg(2+). 294–296 (ETQ) lines the substrate pocket. The ATP site is built by Asp-470 and Gly-507. Ser-510 is a binding site for substrate.

It belongs to the FGAMS family. Monomer. Part of the FGAM synthase complex composed of 1 PurL, 1 PurQ and 2 PurS subunits.

It is found in the cytoplasm. The enzyme catalyses N(2)-formyl-N(1)-(5-phospho-beta-D-ribosyl)glycinamide + L-glutamine + ATP + H2O = 2-formamido-N(1)-(5-O-phospho-beta-D-ribosyl)acetamidine + L-glutamate + ADP + phosphate + H(+). The protein operates within purine metabolism; IMP biosynthesis via de novo pathway; 5-amino-1-(5-phospho-D-ribosyl)imidazole from N(2)-formyl-N(1)-(5-phospho-D-ribosyl)glycinamide: step 1/2. Its function is as follows. Part of the phosphoribosylformylglycinamidine synthase complex involved in the purines biosynthetic pathway. Catalyzes the ATP-dependent conversion of formylglycinamide ribonucleotide (FGAR) and glutamine to yield formylglycinamidine ribonucleotide (FGAM) and glutamate. The FGAM synthase complex is composed of three subunits. PurQ produces an ammonia molecule by converting glutamine to glutamate. PurL transfers the ammonia molecule to FGAR to form FGAM in an ATP-dependent manner. PurS interacts with PurQ and PurL and is thought to assist in the transfer of the ammonia molecule from PurQ to PurL. The polypeptide is Phosphoribosylformylglycinamidine synthase subunit PurL (Saccharolobus islandicus (strain M.16.4 / Kamchatka #3) (Sulfolobus islandicus)).